We begin with the raw amino-acid sequence, 134 residues long: VDILEEKTKDQDLEIELYKYMGPLKEQSKSTSAASTSDELSGSEGPSTESTSTGNQGEDKTTDNTYKEMEELEEAEGTSNLKKGLEFYKSSLKLDQLDKEKPKKKKSKRKKKRDSSSDRILLEESKTFTSENEL.

Disordered regions lie at residues 21–82 (MGPL…SNLK) and 96–134 (QLDK…ENEL). Polar residues predominate over residues 29-38 (KSTSAASTSD). Over residues 39–54 (ELSGSEGPSTESTSTG) the composition is skewed to low complexity. Residues 57-69 (GEDKTTDNTYKEM) are compositionally biased toward basic and acidic residues. A compositionally biased stretch (basic residues) spans 102 to 113 (PKKKKSKRKKKR). The segment covering 114-126 (DSSSDRILLEESK) has biased composition (basic and acidic residues).

This is Rhoptry antigen protein from Plasmodium falciparum.